Reading from the N-terminus, the 190-residue chain is Cytoplasmic envelopment protein 3 (190 aa).

Residue Gly2 is the site of N-myristoyl glycine; by host attachment. Residues 27-190 are disordered; the sequence is RQVSLRSYDN…TKKPAASLPF (164 aa). Positions 30-43 are enriched in polar residues; it reads SLRSYDNIPPTSSS. Positions 44–58 are enriched in acidic residues; sequence DEGEDDDDGEDDDNE. Basic and acidic residues predominate over residues 80–90; that stretch reads SHREATHDGSK. Over residues 108–123 the composition is skewed to basic residues; the sequence is KQSKKKKKPSKHHHHQ. Over residues 130 to 139 the composition is skewed to acidic residues; sequence ETDDLDEEDT.

Belongs to the herpesviridae cytoplasmic envelopment protein 3 family. Interacts with cytoplasmic envelopment protein 2; this interaction is essential for the proper localization of each protein to the assembly complex and thus for the production of infectious virus. In terms of processing, myristoylation and palmitoylation (probably on one or more of the nearby cysteines at the N-terminus) enable membrane-binding and Golgi apparatus-specific targeting and are essential for efficient packaging. Post-translationally, phosphorylated. Phosphorylation does not seem to be required for recycling to the host Golgi apparatus. Packaging is selective for underphosphorylated forms.

It localises to the virion tegument. Its subcellular location is the virion membrane. The protein resides in the host cell membrane. The protein localises to the host Golgi apparatus membrane. Functionally, plays an important role in the cytoplasmic envelopment of tegument proteins and capsids during the assembly and egress processes. Also participates in viral entry at the fusion step probably by regulating the core fusion machinery. The chain is Cytoplasmic envelopment protein 3 (UL99) from Human cytomegalovirus (strain AD169) (HHV-5).